Here is a 526-residue protein sequence, read N- to C-terminus: NAD(P)H-quinone oxidoreductase chain 4 (526 aa).

Transmembrane regions (helical) follow at residues 5–25, 32–52, 87–107, 111–131, 133–153, 165–185, 211–231, 239–259, 273–293, 302–320, 331–351, 371–393, and 414–434; these read FPWL…VPLI, WYSF…FFTS, LILL…PVTL, MFHF…AVQD, VLFF…LAIW, FILY…AMYF, FLGL…HTWL, TAPV…YALI, FAPL…LTSF, IAYS…VGSL, QMIS…ATYD, IFAM…GFVA, and LVVL…LSML.

The protein belongs to the complex I subunit 4 family.

Its subcellular location is the cell inner membrane. It catalyses the reaction a plastoquinone + NADH + (n+1) H(+)(in) = a plastoquinol + NAD(+) + n H(+)(out). The enzyme catalyses a plastoquinone + NADPH + (n+1) H(+)(in) = a plastoquinol + NADP(+) + n H(+)(out). NDH-1 shuttles electrons from NAD(P)H, via FMN and iron-sulfur (Fe-S) centers, to quinones in the respiratory chain. The immediate electron acceptor for the enzyme in this species is believed to be plastoquinone. Couples the redox reaction to proton translocation (for every two electrons transferred, four hydrogen ions are translocated across the cytoplasmic membrane), and thus conserves the redox energy in a proton gradient. This is NAD(P)H-quinone oxidoreductase chain 4 from Gloeobacter violaceus (strain ATCC 29082 / PCC 7421).